The chain runs to 217 residues: 3,4-dihydroxy-2-butanone 4-phosphate synthase (217 aa).

D-ribulose 5-phosphate-binding positions include 37–38 (RE), Asp42, 150–154 (RGGHT), and Glu174. Glu38 is a Mg(2+) binding site. Residue His153 coordinates Mg(2+).

Belongs to the DHBP synthase family. In terms of assembly, homodimer. Mg(2+) serves as cofactor. The cofactor is Mn(2+).

The enzyme catalyses D-ribulose 5-phosphate = (2S)-2-hydroxy-3-oxobutyl phosphate + formate + H(+). It functions in the pathway cofactor biosynthesis; riboflavin biosynthesis; 2-hydroxy-3-oxobutyl phosphate from D-ribulose 5-phosphate: step 1/1. In terms of biological role, catalyzes the conversion of D-ribulose 5-phosphate to formate and 3,4-dihydroxy-2-butanone 4-phosphate. The protein is 3,4-dihydroxy-2-butanone 4-phosphate synthase of Enterobacter sp. (strain 638).